The following is a 315-amino-acid chain: Porphobilinogen deaminase (315 aa).

C241 bears the S-(dipyrrolylmethanemethyl)cysteine mark.

It belongs to the HMBS family. In terms of assembly, monomer. It depends on dipyrromethane as a cofactor.

The catalysed reaction is 4 porphobilinogen + H2O = hydroxymethylbilane + 4 NH4(+). It participates in porphyrin-containing compound metabolism; protoporphyrin-IX biosynthesis; coproporphyrinogen-III from 5-aminolevulinate: step 2/4. Its function is as follows. Tetrapolymerization of the monopyrrole PBG into the hydroxymethylbilane pre-uroporphyrinogen in several discrete steps. The chain is Porphobilinogen deaminase from Nitratidesulfovibrio vulgaris (strain ATCC 29579 / DSM 644 / CCUG 34227 / NCIMB 8303 / VKM B-1760 / Hildenborough) (Desulfovibrio vulgaris).